An 83-amino-acid polypeptide reads, in one-letter code: Toxin AahP985 (83 aa).

Residues 1–18 (MNYLVMISLALLIAGVDS) form the signal peptide. The 63-residue stretch at 20-82 (RDAYIAKNDN…VPIKLSGECH (63 aa)) folds into the LCN-type CS-alpha/beta domain. 4 disulfides stabilise this stretch: Cys30–Cys81, Cys34–Cys54, Cys40–Cys64, and Cys44–Cys66.

Belongs to the long (4 C-C) scorpion toxin superfamily. Sodium channel inhibitor family. Alpha subfamily. In terms of tissue distribution, expressed by the venom gland.

Its subcellular location is the secreted. Functionally, binds voltage-independently at site-3 of sodium channels (Nav) and inhibits the inactivation of the activated channels, thereby blocking neuronal transmission. The chain is Toxin AahP985 from Androctonus australis (Sahara scorpion).